The following is a 137-amino-acid chain: ATP synthase epsilon chain (137 aa).

This sequence belongs to the ATPase epsilon chain family. F-type ATPases have 2 components, CF(1) - the catalytic core - and CF(0) - the membrane proton channel. CF(1) has five subunits: alpha(3), beta(3), gamma(1), delta(1), epsilon(1). CF(0) has three main subunits: a, b and c.

The protein localises to the cell inner membrane. Its function is as follows. Produces ATP from ADP in the presence of a proton gradient across the membrane. In Pseudoalteromonas atlantica (strain T6c / ATCC BAA-1087), this protein is ATP synthase epsilon chain.